A 337-amino-acid polypeptide reads, in one-letter code: Ribosomal RNA small subunit methyltransferase H (337 aa).

S-adenosyl-L-methionine is bound by residues 45-47 (GGH), aspartate 64, phenylalanine 91, aspartate 120, and glutamine 127.

Belongs to the methyltransferase superfamily. RsmH family.

The protein resides in the cytoplasm. It carries out the reaction cytidine(1402) in 16S rRNA + S-adenosyl-L-methionine = N(4)-methylcytidine(1402) in 16S rRNA + S-adenosyl-L-homocysteine + H(+). Specifically methylates the N4 position of cytidine in position 1402 (C1402) of 16S rRNA. The chain is Ribosomal RNA small subunit methyltransferase H from Corynebacterium glutamicum (strain R).